Here is a 98-residue protein sequence, read N- to C-terminus: Gene 4 protein (98 aa).

In terms of domain architecture, HNH spans 38-73 (GCVRAATDVDHIKRGNDHSRSNLQAACHVCHGKKSA). The tract at residues 75–98 (EGVARRRELRARRKRPPERHPGRR) is disordered. Over residues 81–98 (RELRARRKRPPERHPGRR) the composition is skewed to basic residues.

The sequence is that of Gene 4 protein (4) from Mycobacterium (Mycobacteriophage L5).